Here is a 112-residue protein sequence, read N- to C-terminus: Large ribosomal subunit protein eL36y (112 aa).

Over residues 79-88 (KLGTHKRAKR) the composition is skewed to basic residues. Residues 79–112 (KLGTHKRAKRKREEMSSVLRKMRSGGGGATEKKK) form a disordered region. Gly residues predominate over residues 102 to 112 (SGGGGATEKKK).

It belongs to the eukaryotic ribosomal protein eL36 family.

The sequence is that of Large ribosomal subunit protein eL36y (RPL36B) from Arabidopsis thaliana (Mouse-ear cress).